A 438-amino-acid polypeptide reads, in one-letter code: Tol-Pal system protein TolB (438 aa).

The first 21 residues, methionine 1–alanine 21, serve as a signal peptide directing secretion.

The protein belongs to the TolB family. The Tol-Pal system is composed of five core proteins: the inner membrane proteins TolA, TolQ and TolR, the periplasmic protein TolB and the outer membrane protein Pal. They form a network linking the inner and outer membranes and the peptidoglycan layer.

It localises to the periplasm. Its function is as follows. Part of the Tol-Pal system, which plays a role in outer membrane invagination during cell division and is important for maintaining outer membrane integrity. This chain is Tol-Pal system protein TolB, found in Desulfosudis oleivorans (strain DSM 6200 / JCM 39069 / Hxd3) (Desulfococcus oleovorans).